Here is a 304-residue protein sequence, read N- to C-terminus: MKIIFMGTPEFAVPALTKLINSNHKVVAAFTQPPKAKGRGLSETKSPIHQLADEAQIPVYTPTTLRNEEAANLINNIDADIIVVIAYGFIIPQNILDAKKYGCLNIHPSDLPRHRGAAPLQRTIIEGDKTSSVCIMQMDAGLDTGDILMKEDFDLPKKITLQELHDKCANLGAELLIKTLANIDKIVPKPQSNEGVTYTHKLTKEEGRVNWQDSAFSINCKVRGMNPWPGVYFKYNDKTIKILEAEYSDEEHNFTPGTIINKNLEIACGKGILMIKKLQQEGKKVLNIEEFLRGFKTPVINKVQ.

(6S)-5,6,7,8-tetrahydrofolate is bound at residue 109–112; that stretch reads SDLP.

Belongs to the Fmt family.

The catalysed reaction is L-methionyl-tRNA(fMet) + (6R)-10-formyltetrahydrofolate = N-formyl-L-methionyl-tRNA(fMet) + (6S)-5,6,7,8-tetrahydrofolate + H(+). In terms of biological role, attaches a formyl group to the free amino group of methionyl-tRNA(fMet). The formyl group appears to play a dual role in the initiator identity of N-formylmethionyl-tRNA by promoting its recognition by IF2 and preventing the misappropriation of this tRNA by the elongation apparatus. The polypeptide is Methionyl-tRNA formyltransferase (Rickettsia bellii (strain RML369-C)).